Consider the following 314-residue polypeptide: Olfactory receptor 8U9 (314 aa).

The Extracellular portion of the chain corresponds to 1–25; it reads MAQINCTQVTEFILVGLTDREELKM. N-linked (GlcNAc...) asparagine glycosylation is present at Asn-5. The chain crosses the membrane as a helical span at residues 26 to 46; it reads PLFVVFLSIYLFTTLGNLGLI. Residues 47-54 lie on the Cytoplasmic side of the membrane; it reads LVIRTDAR. Residues 55 to 75 traverse the membrane as a helical segment; it reads LHTPMYFFLSNLAFVDFCYSS. At 76–99 the chain is on the extracellular side; it reads VITPKMLGNFLYKQNMISFNACAA. A disulfide bridge links Cys-97 with Cys-189. A helical membrane pass occupies residues 100-120; sequence QLGCFLAFMTAECLLLASMAY. Residues 121–133 lie on the Cytoplasmic side of the membrane; sequence DRYVAICNPLLYM. Residues 134–154 form a helical membrane-spanning segment; that stretch reads VLMSPGICFQLVAAPYSYSFL. Over 155 to 196 the chain is Extracellular; the sequence is VALFHAILTFRLCYCHSNAINHFYCDDMPLLRLTCSDTHSKQ. Residues 197–217 traverse the membrane as a helical segment; it reads LWIFVCAGIMFISSLLIVFIS. Residues 218–237 are Cytoplasmic-facing; that stretch reads YTFIISAILRMRSAEGRRKA. The chain crosses the membrane as a helical span at residues 238 to 258; sequence FSTCGSHMLAVTIFYGTLIFM. Over 259 to 271 the chain is Extracellular; that stretch reads YLQPSSNHSLDTD. A glycan (N-linked (GlcNAc...) asparagine) is linked at Asn-265. A helical transmembrane segment spans residues 272–292; the sequence is KMASVFYTVIIPMLNPLIYSL. At 293 to 314 the chain is on the cytoplasmic side; the sequence is RNKEVKDALKKLIASKNQMLSS.

Belongs to the G-protein coupled receptor 1 family.

The protein resides in the cell membrane. Potential odorant receptor. The sequence is that of Olfactory receptor 8U9 from Mus musculus (Mouse).